The chain runs to 173 residues: MKRVLYPGTFDPITLGHVDVISKAARLFDEVVVGVAAQTPKETLFELEERMELVERTLKHFSFSNAIALPYTGLTVDFAKELNCCAIIRGLRAVSDFETEFQLALMNRRLKPEIETLFLMPEDNHIYLSSSLVKEISRLGGEISAFVPTVVMEALKQKIGKRNSNPVAISRPR.

Residue Thr-9 participates in substrate binding. Residues 9–10 and His-17 each bind ATP; that span reads TF. Residues Lys-41, Thr-75, and Arg-89 each coordinate substrate. ATP is bound by residues 90–92, Glu-100, and 125–131; these read GLR and HIYLSSS.

It belongs to the bacterial CoaD family. In terms of assembly, homohexamer. Mg(2+) serves as cofactor.

The protein resides in the cytoplasm. It catalyses the reaction (R)-4'-phosphopantetheine + ATP + H(+) = 3'-dephospho-CoA + diphosphate. It functions in the pathway cofactor biosynthesis; coenzyme A biosynthesis; CoA from (R)-pantothenate: step 4/5. In terms of biological role, reversibly transfers an adenylyl group from ATP to 4'-phosphopantetheine, yielding dephospho-CoA (dPCoA) and pyrophosphate. This Methylacidiphilum infernorum (isolate V4) (Methylokorus infernorum (strain V4)) protein is Phosphopantetheine adenylyltransferase.